Consider the following 1588-residue polypeptide: Pentafunctional AROM polypeptide (1588 aa).

A 3-dehydroquinate synthase region spans residues 1–392; that stretch reads MVQLAKVPIL…YGDSAQFVSD (392 aa). NAD(+)-binding positions include 43 to 45, 78 to 81, 109 to 111, and D114; these read DTN, ETSK, and GGV. Residue R125 coordinates 7-phospho-2-dehydro-3-deoxy-D-arabino-heptonate. NAD(+) is bound at residue 134–135; sequence TS. 2 residues coordinate 7-phospho-2-dehydro-3-deoxy-D-arabino-heptonate: D141 and K147. K156 lines the NAD(+) pocket. N157 provides a ligand contact to 7-phospho-2-dehydro-3-deoxy-D-arabino-heptonate. NAD(+)-binding positions include 174-177 and N185; that span reads WLET. E189 serves as a coordination point for Zn(2+). 7-phospho-2-dehydro-3-deoxy-D-arabino-heptonate-binding positions include 189-192 and K258; that span reads EVIK. Residue E268 is the Proton acceptor; for 3-dehydroquinate synthase activity of the active site. 7-phospho-2-dehydro-3-deoxy-D-arabino-heptonate contacts are provided by residues 272 to 276 and H279; that span reads RNLLN. Zn(2+) is bound at residue H279. H283 acts as the Proton acceptor; for 3-dehydroquinate synthase activity in catalysis. 7-phospho-2-dehydro-3-deoxy-D-arabino-heptonate contacts are provided by H295 and K364. A Zn(2+)-binding site is contributed by H295. Residues 405 to 871 are EPSP synthase; that stretch reads VYPFKDIPAD…WDVLHSELGA (467 aa). The active-site For EPSP synthase activity is C853. Positions 890–1080 are shikimate kinase; that stretch reads SVVIIGMRAA…IPSGRSAFVC (191 aa). Residue 895–902 participates in ATP binding; it reads GMRAAGKT. The 3-dehydroquinase stretch occupies residues 1081–1293; it reads LTFDDLTEQT…AAPGQLTVAQ (213 aa). H1198 functions as the Proton acceptor; for 3-dehydroquinate dehydratase activity in the catalytic mechanism. Residue K1227 is the Schiff-base intermediate with substrate; for 3-dehydroquinate dehydratase activity of the active site. The segment at 1306–1588 is shikimate dehydrogenase; the sequence is PKELFVVGKP…KAIFDAVTKE (283 aa).

The protein in the N-terminal section; belongs to the sugar phosphate cyclases superfamily. Dehydroquinate synthase family. In the 2nd section; belongs to the EPSP synthase family. This sequence in the 3rd section; belongs to the shikimate kinase family. It in the 4th section; belongs to the type-I 3-dehydroquinase family. The protein in the C-terminal section; belongs to the shikimate dehydrogenase family. As to quaternary structure, homodimer. It depends on Zn(2+) as a cofactor.

It is found in the cytoplasm. It catalyses the reaction 7-phospho-2-dehydro-3-deoxy-D-arabino-heptonate = 3-dehydroquinate + phosphate. It carries out the reaction 3-dehydroquinate = 3-dehydroshikimate + H2O. The enzyme catalyses shikimate + NADP(+) = 3-dehydroshikimate + NADPH + H(+). The catalysed reaction is shikimate + ATP = 3-phosphoshikimate + ADP + H(+). It catalyses the reaction 3-phosphoshikimate + phosphoenolpyruvate = 5-O-(1-carboxyvinyl)-3-phosphoshikimate + phosphate. Its pathway is metabolic intermediate biosynthesis; chorismate biosynthesis; chorismate from D-erythrose 4-phosphate and phosphoenolpyruvate: step 2/7. It participates in metabolic intermediate biosynthesis; chorismate biosynthesis; chorismate from D-erythrose 4-phosphate and phosphoenolpyruvate: step 3/7. The protein operates within metabolic intermediate biosynthesis; chorismate biosynthesis; chorismate from D-erythrose 4-phosphate and phosphoenolpyruvate: step 4/7. It functions in the pathway metabolic intermediate biosynthesis; chorismate biosynthesis; chorismate from D-erythrose 4-phosphate and phosphoenolpyruvate: step 5/7. Its pathway is metabolic intermediate biosynthesis; chorismate biosynthesis; chorismate from D-erythrose 4-phosphate and phosphoenolpyruvate: step 6/7. Functionally, the AROM polypeptide catalyzes 5 consecutive enzymatic reactions in prechorismate polyaromatic amino acid biosynthesis. The protein is Pentafunctional AROM polypeptide of Saccharomyces cerevisiae (strain ATCC 204508 / S288c) (Baker's yeast).